We begin with the raw amino-acid sequence, 417 residues long: D-amino acid dehydrogenase (417 aa).

3-17 (IVVLGGGVVGVTSAW) contacts FAD.

Belongs to the DadA oxidoreductase family. Requires FAD as cofactor.

It carries out the reaction a D-alpha-amino acid + A + H2O = a 2-oxocarboxylate + AH2 + NH4(+). Its pathway is amino-acid degradation; D-alanine degradation; NH(3) and pyruvate from D-alanine: step 1/1. In terms of biological role, oxidative deamination of D-amino acids. The sequence is that of D-amino acid dehydrogenase from Aeromonas salmonicida (strain A449).